The following is a 397-amino-acid chain: MYILDTGARFSAVRFSPVFNPPPTSLRRRYFIVRANLPFPKHQAKYHKELEVAIDAVDRACRLCVDVKRSLFSSKEKIVEKNDQTPVTIADFGVQALVSLELSKLFPSIPLVAEEDSHFVRANNLVSSVVSEVKSKASIGDNHLSDADVLEAIDRGGKDAYTFCNKPATYWVLDPIDGTRGFLKGDEALYVVGLALVVDNEIVLGVMGCPNWPGDSSDGSTGTLMLSHIGCGTWTKKLQNVSGNVAGDWIRCFVDACVLMNKARFCIQESQTWESLPLSGFFDASTVSEDLKHKEILLLPTCCGSLCKYLMVASGRASVFLLRAKTQRTIKSWDHAVGIICVHEAGGKVTDWEGDEINLEEDQSERRLIFPAGGVVVSNGSLHNQILEMISSASPTL.

The N-terminal 16 residues, 1–16, are a transit peptide targeting the mitochondrion; that stretch reads MYILDTGARFSAVRFS. Aspartate 91 acts as the Proton acceptor in catalysis. Positions 114, 174, 176, and 177 each coordinate Mg(2+). Threonine 179 (proton acceptor) is an active-site residue. 4 residues coordinate adenosine 3',5'-bisphosphate: threonine 179, serine 305, lysine 308, and aspartate 334. AMP is bound by residues serine 305, lysine 308, and aspartate 334. Aspartate 334 contacts Mg(2+).

This sequence belongs to the inositol monophosphatase superfamily. It depends on Mg(2+) as a cofactor.

Its subcellular location is the mitochondrion. The catalysed reaction is 3'-phosphoadenylyl sulfate + H2O = adenosine 5'-phosphosulfate + phosphate. The enzyme catalyses adenosine 3',5'-bisphosphate + H2O = AMP + phosphate. It catalyses the reaction adenosine 2',5'-bisphosphate + H2O = AMP + phosphate. In terms of biological role, phosphatase that converts adenosine 3'-phosphate 5'-phosphosulfate (PAPS) to adenosine 5'-phosphosulfate (APS) and 3'(2')-phosphoadenosine 5'-phosphate (PAP) to AMP. This chain is Putative 3'(2'),5'-bisphosphate nucleotidase, mitochondrial, found in Arabidopsis thaliana (Mouse-ear cress).